The chain runs to 465 residues: Glutamate--tRNA ligase (465 aa).

Positions proline 11–asparagine 21 match the 'HIGH' region motif. The segment covering lysine 120–proline 131 has biased composition (basic and acidic residues). Positions lysine 120–proline 139 are disordered. The short motif at lysine 243–arginine 247 is the 'KMSKS' region element. Lysine 246 provides a ligand contact to ATP.

The protein belongs to the class-I aminoacyl-tRNA synthetase family. Glutamate--tRNA ligase type 1 subfamily. Monomer.

The protein resides in the cytoplasm. It catalyses the reaction tRNA(Glu) + L-glutamate + ATP = L-glutamyl-tRNA(Glu) + AMP + diphosphate. Its function is as follows. Catalyzes the attachment of glutamate to tRNA(Glu) in a two-step reaction: glutamate is first activated by ATP to form Glu-AMP and then transferred to the acceptor end of tRNA(Glu). The protein is Glutamate--tRNA ligase of Ralstonia nicotianae (strain ATCC BAA-1114 / GMI1000) (Ralstonia solanacearum).